A 375-amino-acid chain; its full sequence is Growth/differentiation factor 8 (375 aa).

Residues 1–18 form the signal peptide; that stretch reads MQKLQIFVYIYLFVLIVA. Residues 19–266 constitute a propeptide that is removed on maturation; it reads GPVDLNENSE…VTDTPKRSRR (248 aa). N-linked (GlcNAc...) asparagine glycans are attached at residues asparagine 48 and asparagine 71. 4 disulfides stabilise this stretch: cysteine 272–cysteine 282, cysteine 281–cysteine 340, cysteine 309–cysteine 372, and cysteine 313–cysteine 374.

This sequence belongs to the TGF-beta family. In terms of assembly, homodimer; disulfide-linked. Interacts with WFIKKN2, leading to inhibit its activity. Interacts with FSTL3. Synthesized as large precursor molecule that undergoes proteolytic cleavage to generate an N-terminal propeptide and a disulfide linked C-terminal dimer, which is the biologically active molecule. The circulating form consists of a latent complex of the C-terminal dimer and other proteins, including its propeptide, which maintain the C-terminal dimer in a latent, inactive state. Ligand activation requires additional cleavage of the prodomain by a tolloid-like metalloproteinase.

Its subcellular location is the secreted. Acts specifically as a negative regulator of skeletal muscle growth. The chain is Growth/differentiation factor 8 (MSTN) from Aepyceros melampus (Impala).